Reading from the N-terminus, the 263-residue chain is Hydroxyacylglutathione hydrolase (263 aa).

Zn(2+)-binding residues include His55, His57, Asp59, His60, His117, Asp134, and His172.

This sequence belongs to the metallo-beta-lactamase superfamily. Glyoxalase II family. In terms of assembly, monomer. The cofactor is Zn(2+).

It catalyses the reaction an S-(2-hydroxyacyl)glutathione + H2O = a 2-hydroxy carboxylate + glutathione + H(+). Its pathway is secondary metabolite metabolism; methylglyoxal degradation; (R)-lactate from methylglyoxal: step 2/2. Thiolesterase that catalyzes the hydrolysis of S-D-lactoyl-glutathione to form glutathione and D-lactic acid. This is Hydroxyacylglutathione hydrolase from Shewanella baltica (strain OS223).